We begin with the raw amino-acid sequence, 316 residues long: 4-hydroxy-3-methylbut-2-enyl diphosphate reductase (316 aa).

Cys-12 contacts [4Fe-4S] cluster. Positions 41 and 74 each coordinate (2E)-4-hydroxy-3-methylbut-2-enyl diphosphate. The dimethylallyl diphosphate site is built by His-41 and His-74. Residues His-41 and His-74 each coordinate isopentenyl diphosphate. A [4Fe-4S] cluster-binding site is contributed by Cys-96. His-124 is a binding site for (2E)-4-hydroxy-3-methylbut-2-enyl diphosphate. His-124 serves as a coordination point for dimethylallyl diphosphate. His-124 provides a ligand contact to isopentenyl diphosphate. The Proton donor role is filled by Glu-126. Thr-169 is a (2E)-4-hydroxy-3-methylbut-2-enyl diphosphate binding site. Residue Cys-199 participates in [4Fe-4S] cluster binding. (2E)-4-hydroxy-3-methylbut-2-enyl diphosphate-binding residues include Ser-227, Ser-228, Asn-229, and Ser-271. Residues Ser-227, Ser-228, Asn-229, and Ser-271 each coordinate dimethylallyl diphosphate. Residues Ser-227, Ser-228, Asn-229, and Ser-271 each coordinate isopentenyl diphosphate.

The protein belongs to the IspH family. Requires [4Fe-4S] cluster as cofactor.

The enzyme catalyses isopentenyl diphosphate + 2 oxidized [2Fe-2S]-[ferredoxin] + H2O = (2E)-4-hydroxy-3-methylbut-2-enyl diphosphate + 2 reduced [2Fe-2S]-[ferredoxin] + 2 H(+). It carries out the reaction dimethylallyl diphosphate + 2 oxidized [2Fe-2S]-[ferredoxin] + H2O = (2E)-4-hydroxy-3-methylbut-2-enyl diphosphate + 2 reduced [2Fe-2S]-[ferredoxin] + 2 H(+). The protein operates within isoprenoid biosynthesis; dimethylallyl diphosphate biosynthesis; dimethylallyl diphosphate from (2E)-4-hydroxy-3-methylbutenyl diphosphate: step 1/1. Its pathway is isoprenoid biosynthesis; isopentenyl diphosphate biosynthesis via DXP pathway; isopentenyl diphosphate from 1-deoxy-D-xylulose 5-phosphate: step 6/6. In terms of biological role, catalyzes the conversion of 1-hydroxy-2-methyl-2-(E)-butenyl 4-diphosphate (HMBPP) into a mixture of isopentenyl diphosphate (IPP) and dimethylallyl diphosphate (DMAPP). Acts in the terminal step of the DOXP/MEP pathway for isoprenoid precursor biosynthesis. The polypeptide is 4-hydroxy-3-methylbut-2-enyl diphosphate reductase (Xanthomonas campestris pv. campestris (strain ATCC 33913 / DSM 3586 / NCPPB 528 / LMG 568 / P 25)).